Here is a 215-residue protein sequence, read N- to C-terminus: Putative BTB/POZ domain-containing protein At2g05330 (215 aa).

Residues 17–87 form the BTB domain; that stretch reads SWQKIGKLTY…LYSDGSMLSS (71 aa).

It participates in protein modification; protein ubiquitination. Functionally, may act as a substrate-specific adapter of an E3 ubiquitin-protein ligase complex (CUL3-RBX1-BTB) which mediates the ubiquitination and subsequent proteasomal degradation of target proteins. This Arabidopsis thaliana (Mouse-ear cress) protein is Putative BTB/POZ domain-containing protein At2g05330.